Here is a 759-residue protein sequence, read N- to C-terminus: Forkhead box protein M1 (759 aa).

Residues 1–92 (MRTSPRRPLI…MRLPSNPPQS (92 aa)) form a disordered region. Residues 48–63 (LAHELEDMAPKSKADQ) show a composition bias toward basic and acidic residues. A DNA-binding region (fork-head) is located at residues 260–358 (RPPYSYMALI…KTASPMSPAD (99 aa)). Disordered stretches follow at residues 420-450 (AESS…KHLG), 516-535 (SANP…PSNV), and 596-631 (KEHF…RDPV). The span at 601 to 612 (KPTTSSTPSKPT) shows a compositional bias: low complexity.

In terms of tissue distribution, localized to the animal hemisphere of early cleavage stage embryos. During neurulation, expressed in the neural folds. Later, expressed in the spinal cord and in the eye field. During tailbud stages, expression is still restricted to the neuroectoderm, predominantly to the hindbrain, the eye and the spinal cord. With ongoing development, expression is also found at lower levels in the branchial arches. At stage 35, expressed in the rhombencephalon and in the eye retina.

The protein resides in the nucleus. Transcription factor regulating the expression of cell cycle genes essential for DNA replication and mitosis. Plays a role in the control of cell proliferation. Also plays a role in DNA break repair, participating in the DNA damage checkpoint response. Promotes transcription of PHB2. The chain is Forkhead box protein M1 from Xenopus laevis (African clawed frog).